The chain runs to 78 residues: MPKRILQGVVVSDKNEKTIVVNVERRFQDPLLKKIVRRSKKYHAHDENKSAKVGDIVKIRECKPVSKLKKWEVFTDEA.

It belongs to the universal ribosomal protein uS17 family. In terms of assembly, part of the 30S ribosomal subunit.

One of the primary rRNA binding proteins, it binds specifically to the 5'-end of 16S ribosomal RNA. In Parvibaculum lavamentivorans (strain DS-1 / DSM 13023 / NCIMB 13966), this protein is Small ribosomal subunit protein uS17.